Here is a 349-residue protein sequence, read N- to C-terminus: Adenosine deaminase (349 aa).

Zn(2+) contacts are provided by H25 and H27. Positions 27, 29, and 182 each coordinate substrate. H209 provides a ligand contact to Zn(2+). The Proton donor role is filled by E212. Residue D289 participates in Zn(2+) binding.

The protein belongs to the metallo-dependent hydrolases superfamily. Adenosine and AMP deaminases family. Adenosine deaminase subfamily. Requires Zn(2+) as cofactor.

It carries out the reaction adenosine + H2O + H(+) = inosine + NH4(+). The enzyme catalyses 2'-deoxyadenosine + H2O + H(+) = 2'-deoxyinosine + NH4(+). Its function is as follows. Catalyzes the hydrolytic deamination of adenosine and 2-deoxyadenosine. In Streptococcus mutans serotype c (strain ATCC 700610 / UA159), this protein is Adenosine deaminase.